The following is a 248-amino-acid chain: MAGHSQFKNIMHRKGRQDAQKSKLFSKLAREITVAAKLGTPDPAMNARLRAAMIAARAENMPKDNIERAIKKASGHDAESYDELRYEGYGPGGVAIIMEVLTDNRNRAASDIRSYFTKSGGNLGETGSVSFMFDRLGVVEYDADKASADDMLEAAVEAGADDVVSGEGGHEIYASQETFRDVARALEGKFGEARKVALIWKPQNTVAVDDNTGEKLLKLIDLLNEHDDVQNVYANFEVSDALMAKLGG.

The segment at 1 to 21 (MAGHSQFKNIMHRKGRQDAQK) is disordered.

This sequence belongs to the TACO1 family.

Its subcellular location is the cytoplasm. In Nitrobacter hamburgensis (strain DSM 10229 / NCIMB 13809 / X14), this protein is Probable transcriptional regulatory protein Nham_3525.